The primary structure comprises 98 residues: Integration host factor subunit alpha (98 aa).

Positions 49 to 70 are disordered; sequence FGNFDLRDKNQRPGRNPKTGED.

It belongs to the bacterial histone-like protein family. Heterodimer of an alpha and a beta chain.

This protein is one of the two subunits of integration host factor, a specific DNA-binding protein that functions in genetic recombination as well as in transcriptional and translational control. The chain is Integration host factor subunit alpha from Yersinia pestis.